Here is a 1587-residue protein sequence, read N- to C-terminus: Autophagy-related protein 2 (1587 aa).

Positions 128–160 (NEISGSGSDSPRIPDDYTNPSSAGGNPTTNTYD) are disordered. Over residues 145–159 (TNPSSAGGNPTTNTY) the composition is skewed to polar residues.

This sequence belongs to the ATG2 family.

The protein localises to the preautophagosomal structure membrane. Its subcellular location is the endoplasmic reticulum membrane. It catalyses the reaction a 1,2-diacyl-sn-glycero-3-phosphocholine(in) = a 1,2-diacyl-sn-glycero-3-phosphocholine(out). The catalysed reaction is a 1,2-diacyl-sn-glycero-3-phospho-L-serine(in) = a 1,2-diacyl-sn-glycero-3-phospho-L-serine(out). The enzyme catalyses a 1,2-diacyl-sn-glycero-3-phosphoethanolamine(in) = a 1,2-diacyl-sn-glycero-3-phosphoethanolamine(out). Functionally, lipid transfer protein required for autophagosome completion and peroxisome degradation. Tethers the edge of the isolation membrane (IM) to the endoplasmic reticulum (ER) and mediates direct lipid transfer from ER to IM for IM expansion. ATG2 binds to the ER exit site (ERES), which is the membrane source for autophagosome formation, using basic residues in its N-terminal region (NR) and to the expanding edge of the IM through its C-terminal region. The latter binding is assisted by an ATG18-PtdIns3P interaction. ATG2 then extracts phospholipids from the membrane source using its NR and transfers them to ATG9 to the IM through its predicted beta-sheet-rich structure for membrane expansion. This is Autophagy-related protein 2 (ATG2) from Candida glabrata (strain ATCC 2001 / BCRC 20586 / JCM 3761 / NBRC 0622 / NRRL Y-65 / CBS 138) (Yeast).